Here is a 380-residue protein sequence, read N- to C-terminus: Cytochrome b (380 aa).

4 helical membrane passes run 34–54 (FGSL…LLAM), 78–99 (WLIR…YLHI), 114–134 (WNTG…GYVL), and 179–199 (FFAL…IHLT). 2 residues coordinate heme b: His-84 and His-98. 2 residues coordinate heme b: His-183 and His-197. Residue His-202 participates in a ubiquinone binding. 4 helical membrane passes run 227–247 (LKDI…ALFS), 289–309 (LGGV…PFLH), 321–341 (LSQL…WVGS), and 348–368 (FIII…ILFP).

This sequence belongs to the cytochrome b family. In terms of assembly, the cytochrome bc1 complex contains 11 subunits: 3 respiratory subunits (MT-CYB, CYC1 and UQCRFS1), 2 core proteins (UQCRC1 and UQCRC2) and 6 low-molecular weight proteins (UQCRH/QCR6, UQCRB/QCR7, UQCRQ/QCR8, UQCR10/QCR9, UQCR11/QCR10 and a cleavage product of UQCRFS1). This cytochrome bc1 complex then forms a dimer. It depends on heme b as a cofactor.

Its subcellular location is the mitochondrion inner membrane. Component of the ubiquinol-cytochrome c reductase complex (complex III or cytochrome b-c1 complex) that is part of the mitochondrial respiratory chain. The b-c1 complex mediates electron transfer from ubiquinol to cytochrome c. Contributes to the generation of a proton gradient across the mitochondrial membrane that is then used for ATP synthesis. This is Cytochrome b (MT-CYB) from Ardenna tenuirostris (Short-tailed shearwater).